We begin with the raw amino-acid sequence, 273 residues long: Multidrug-efflux transporter 2 regulator (273 aa).

The region spanning 8–77 is the HTH merR-type domain; sequence YFTTGEFSKL…LKEIKCLIKG (70 aa). The H-T-H motif DNA-binding region spans 11-30; that stretch reads TGEFSKLCRVKKQTLFHYDE.

Functionally, activates transcription of the blt gene in response to structurally dissimilar drugs. This Bacillus subtilis (strain 168) protein is Multidrug-efflux transporter 2 regulator (bltR).